Consider the following 165-residue polypeptide: Small ribosomal subunit protein uS5 (165 aa).

In terms of domain architecture, S5 DRBM spans 10–73 (QIEKLISLNR…TSARKNLRFV (64 aa)).

Belongs to the universal ribosomal protein uS5 family. In terms of assembly, part of the 30S ribosomal subunit. Contacts proteins S4 and S8.

With S4 and S12 plays an important role in translational accuracy. Functionally, located at the back of the 30S subunit body where it stabilizes the conformation of the head with respect to the body. The chain is Small ribosomal subunit protein uS5 from Borreliella afzelii (strain PKo) (Borrelia afzelii).